The primary structure comprises 376 residues: Heat-inducible transcription repressor HrcA (376 aa).

Belongs to the HrcA family.

Its function is as follows. Negative regulator of class I heat shock genes (grpE-dnaK-dnaJ and groELS operons). Prevents heat-shock induction of these operons. The polypeptide is Heat-inducible transcription repressor HrcA (Nostoc punctiforme (strain ATCC 29133 / PCC 73102)).